We begin with the raw amino-acid sequence, 358 residues long: Uptake hydrogenase small subunit (358 aa).

Positions Met1–Ala45 are cleaved as a signal peptide. Positions 62, 65, 160, 194, 232, 235, 260, and 266 each coordinate [4Fe-4S] cluster. [3Fe-4S] cluster contacts are provided by Cys275, Cys294, and Cys297.

It belongs to the [NiFe]/[NiFeSe] hydrogenase small subunit family. Heterodimer of a large and a small subunit. [4Fe-4S] cluster serves as cofactor. The cofactor is [3Fe-4S] cluster.

The protein resides in the cell membrane. It catalyses the reaction H2 + A = AH2. Its function is as follows. This enzyme recycles the H(2) produced by nitrogenase to increase the production of ATP and to protect nitrogenase against inhibition or damage by O(2) under carbon- or phosphate-limited conditions. The chain is Uptake hydrogenase small subunit (hupA) from Rhodobacter capsulatus (Rhodopseudomonas capsulata).